The chain runs to 159 residues: F1845 fimbrial protein (159 aa).

Positions 1–21 (MKKLAIMAAASMIFTVGSAQA) are cleaved as a signal peptide.

It belongs to the Dr-adhesin family.

Its subcellular location is the fimbrium. Its function is as follows. Hemagglutinins of uropathogenic E.coli mediate adherence to the upper urinary tract. These adhesins bind to the Dr blood group antigen and also agglutinate human erythrocytes in the presence of D-mannose (mannose-resistant hemagglutination (MRHA)). C1845 is a strain responsible for diarrheal disease. This Escherichia coli protein is F1845 fimbrial protein (daaE).